A 274-amino-acid polypeptide reads, in one-letter code: Ethanolamine ammonia-lyase small subunit (274 aa).

3 residues coordinate adenosylcob(III)alamin: V161, E182, and C211.

It belongs to the EutC family. In terms of assembly, the basic unit is a heterodimer which dimerizes to form tetramers. The heterotetramers trimerize; 6 large subunits form a core ring with 6 small subunits projecting outwards. Requires adenosylcob(III)alamin as cofactor.

It localises to the bacterial microcompartment. It catalyses the reaction ethanolamine = acetaldehyde + NH4(+). The protein operates within amine and polyamine degradation; ethanolamine degradation. Catalyzes the deamination of various vicinal amino-alcohols to oxo compounds. Allows this organism to utilize ethanolamine as the sole source of nitrogen and carbon in the presence of external vitamin B12. The sequence is that of Ethanolamine ammonia-lyase small subunit from Pseudomonas fluorescens (strain Pf0-1).